A 1066-amino-acid chain; its full sequence is E3 ubiquitin-protein ligase PDZRN3 (1066 aa).

Residues 18–56 (CALCHKVLEDPLTTPCGHVFCAGCVLPWVVQEGSCPARC) form an RING-type; degenerate zinc finger. The TRAF-type zinc-finger motif lies at 100–158 (EHLERCDFAPARCRHAGCGQVLLRRDVEAHMRDACDARPVGRCQEGCGLPLTHGEQRAG). PDZ domains are found at residues 249 to 339 (TLVL…LRRT) and 419 to 503 (EVDL…IARP). At S427 the chain carries Phosphoserine. Residues 545–603 (QKKHDEDGGTTDTATILSNQHEKDSGVGRTDESTRNDESSEQENNGDDATASSNPLAGQ) are disordered. Positions 554–563 (TTDTATILSN) are enriched in polar residues. The span at 564–582 (QHEKDSGVGRTDESTRNDE) shows a compositional bias: basic and acidic residues. The span at 594–603 (TASSNPLAGQ) shows a compositional bias: polar residues. The stretch at 679 to 704 (ESVDKELELLNEELRSIELECLSIVR) forms a coiled coil. A compositionally biased stretch (basic and acidic residues) spans 744-754 (TELPEKSDKDS). Disordered regions lie at residues 744 to 778 (TELPEKSDKDSSSAYNTGESCRSTPLTLEISPDNS) and 808 to 863 (LLSI…LPSY). Polar residues-rich tracts occupy residues 755 to 769 (SSAYNTGESCRSTPL) and 845 to 855 (GSRSPTPSQKL). Positions 975-1025 (KEERKQHLVKAKEQRRRREFMMQSRLDCLKEQQAADDRKEMNILELSHKKM) form a coiled coil.

In terms of assembly, interacts with NLGN1 and EFNB2. Interacts with UBE2D2 and with MUSK via the first PDZ domain. In terms of processing, auto-ubiquitinated. Widely expressed, including in the heart, skeletal muscle and liver and, at lower levels, in the brain, colon, small intestine, placenta and lung. Down-regulated in ovarian serous papillary tumors.

It localises to the synapse. The protein localises to the cytoplasm. It catalyses the reaction S-ubiquitinyl-[E2 ubiquitin-conjugating enzyme]-L-cysteine + [acceptor protein]-L-lysine = [E2 ubiquitin-conjugating enzyme]-L-cysteine + N(6)-ubiquitinyl-[acceptor protein]-L-lysine.. It functions in the pathway protein modification; protein ubiquitination. Its function is as follows. E3 ubiquitin-protein ligase. Plays an important role in regulating the surface level of MUSK on myotubes. Mediates the ubiquitination of MUSK, promoting its endocytosis and lysosomal degradation. Might contribute to terminal myogenic differentiation. This chain is E3 ubiquitin-protein ligase PDZRN3 (PDZRN3), found in Homo sapiens (Human).